A 218-amino-acid chain; its full sequence is Large ribosomal subunit protein uL3 (218 aa).

Positions 137–157 (GVGASHGAHKNHRKPGSIGGA) are disordered.

The protein belongs to the universal ribosomal protein uL3 family. As to quaternary structure, part of the 50S ribosomal subunit. Forms a cluster with proteins L14 and L19.

Functionally, one of the primary rRNA binding proteins, it binds directly near the 3'-end of the 23S rRNA, where it nucleates assembly of the 50S subunit. The sequence is that of Large ribosomal subunit protein uL3 from Kocuria rhizophila (strain ATCC 9341 / DSM 348 / NBRC 103217 / DC2201).